A 724-amino-acid chain; its full sequence is Actin-related protein 5 (724 aa).

Disordered stretches follow at residues 358–391, 412–450, and 467–488; these read QSLR…LMNV, TTAE…ESYL, and KKRL…IGRG. Basic and acidic residues predominate over residues 414–446; the sequence is AEGRLRARQKRNEEELEKEKRNQLEEERRRENP. Phosphoserine is present on serine 542.

It belongs to the actin family. ARP5 subfamily. Component of the INO80 chromatin-remodeling complex. Interacts with EEN. As to expression, expressed ubiquitously in seedlings, roots, leaves, buds, flowers and siliques.

It is found in the nucleus. It localises to the nucleoplasm. The protein resides in the cytoplasm. Functionally, probable subunit of a chromatin-remodeling complex. Involved in DNA repair. Required for multicellular development of all organs. The polypeptide is Actin-related protein 5 (Arabidopsis thaliana (Mouse-ear cress)).